The following is a 315-amino-acid chain: Glycine--tRNA ligase alpha subunit (315 aa).

This sequence belongs to the class-II aminoacyl-tRNA synthetase family. In terms of assembly, tetramer of two alpha and two beta subunits.

It localises to the cytoplasm. The catalysed reaction is tRNA(Gly) + glycine + ATP = glycyl-tRNA(Gly) + AMP + diphosphate. The protein is Glycine--tRNA ligase alpha subunit of Pseudomonas paraeruginosa (strain DSM 24068 / PA7) (Pseudomonas aeruginosa (strain PA7)).